We begin with the raw amino-acid sequence, 1392 residues long: MATKAKSVGQALEATATKRIRKLFGNIHEAVEMPNLIEVQRESYEQFLRSDPSIGYVSGLEKTLRSVFPIRDFAGTAELDFVHYELEAPKYDVEECRQRGITYAAPMKVTLRLIVFEVDSETDTRSVLDIKEQDVYMGDMPLMTENGTFFVNGTERVIVSQMHRSPGVLFDHDRGKTHSSGKFLFAARVIPYRGSWLDFEFDAKDIVNVRIDRKRKLPVTSLLYALGMTGEEILNHFYDRLVFERAENGWKVPFMVENWRGSKPAFDVVDAKTGEVVFAAGHKISPRLANKAAKDGLDTLLIPTEEIFGRYSAYDLINESTGEIYIEAGDEVSAENLEKLDAAGIDKLVLLDIDHNNTGPWIRNTLKADKAEDRDQALSDIYRVMRPGEPPTRETAEALFAGLFFDPERYDLSAVGRVKLNMRLGLDAEDTVTTLRSEDILAVVKELVNLKDGKGEIDDIDNLGNRRVRSVGELLENQYRVGLLRMERAVKERMSSVDVSTVMPNDLINAKPAVAAVREFFGSSQLSQFMDQTNPLSEVTHKRRVSALGPGGLTRERAGFEVRDVHPTHYGRICPIETPEGPNIGLINSLATFARVNKYGFIETPYRRVVDGKVTNEVVYLSAMEESKHTVAQANADLNPDGSFIDELISAREAGEFLMAPREQITLMDVSPKQLVSVAASLIPFLENDDANRALMGSNMQRQAVPLLRAEAPVVGTGMEETVARDSGAAIAARRGGVIDQVDATRIVIRATDMVEPGKSGVDIYRLQKFQRSNQNTCINQRPLVKVGDVVRAGDIIADGPSTELGELALGKNVLVAFMPWNGYNYEDSILISERIVKDDVFTSIHIEEFEVTARDTRLGPEDITRDIPNVGEEALRNLDEAGIVYIGAEVGPGDILAGKITPKGESPMTPEEKLLRAIFGEKASDVRDTSLRLPPGVSGTVVEVRVFNRHGIDKDERAIAIEREEIERLKQDADDERAILNRATFSSLKDLLVGQATSAVPKGLKKGDIVTEEMLVGLDRADWWKLAVVDDKAQTALEAIKAQYDDAIKRINAKYEDRVEKLQRGDELAPGVLKMVKVFVAVKRKLQPGDKMAGRHGNKGVISRILPVEDMPFLEDGTPVDIVLNPLGVPSRMNVGQILETHLGWASRGLGQQVTRALEEWRDANPDATGGEMPEAVREKLEHVYGAEYVEDIRSRDAEGIIELASNLKVGVPFATPVFDGAKEADVSNMLTLAGLDESGQSDLYDGRTGDKFDRKVTVGYIYMLKLHHLVDDKIHARSIGPYSLVTQQPLGGKAQFGGQRFGEMEVWALQAYGAAYTLQEMLTVKSDDVIGRTKVYEAIVKGDDTFEAGIPESFNVLVKEMRSLGLNVELSSYAEEDPDEGPEALPEAAE.

A disordered region spans residues 1372–1392; the sequence is LSSYAEEDPDEGPEALPEAAE.

Belongs to the RNA polymerase beta chain family. The RNAP catalytic core consists of 2 alpha, 1 beta, 1 beta' and 1 omega subunit. When a sigma factor is associated with the core the holoenzyme is formed, which can initiate transcription.

It carries out the reaction RNA(n) + a ribonucleoside 5'-triphosphate = RNA(n+1) + diphosphate. In terms of biological role, DNA-dependent RNA polymerase catalyzes the transcription of DNA into RNA using the four ribonucleoside triphosphates as substrates. The chain is DNA-directed RNA polymerase subunit beta from Sphingopyxis alaskensis (strain DSM 13593 / LMG 18877 / RB2256) (Sphingomonas alaskensis).